A 313-amino-acid polypeptide reads, in one-letter code: Putative S-adenosyl-L-methionine-dependent methyltransferase MMAR_0955 (313 aa).

S-adenosyl-L-methionine contacts are provided by residues Asp132 and 161–162 (DL).

The protein belongs to the UPF0677 family.

Functionally, exhibits S-adenosyl-L-methionine-dependent methyltransferase activity. This chain is Putative S-adenosyl-L-methionine-dependent methyltransferase MMAR_0955, found in Mycobacterium marinum (strain ATCC BAA-535 / M).